We begin with the raw amino-acid sequence, 93 residues long: Large ribosomal subunit protein uL23cz/uL23cy (93 aa).

It belongs to the universal ribosomal protein uL23 family. Part of the 50S ribosomal subunit.

Its subcellular location is the plastid. The protein localises to the chloroplast. Binds to 23S rRNA. The chain is Large ribosomal subunit protein uL23cz/uL23cy (rpl23-A) from Populus alba (White poplar).